Here is an 89-residue protein sequence, read N- to C-terminus: DNA-directed RNA polymerase subunit omega (89 aa).

This sequence belongs to the RNA polymerase subunit omega family. As to quaternary structure, the RNAP catalytic core consists of 2 alpha, 1 beta, 1 beta' and 1 omega subunit. When a sigma factor is associated with the core the holoenzyme is formed, which can initiate transcription.

The catalysed reaction is RNA(n) + a ribonucleoside 5'-triphosphate = RNA(n+1) + diphosphate. Its function is as follows. Promotes RNA polymerase assembly. Latches the N- and C-terminal regions of the beta' subunit thereby facilitating its interaction with the beta and alpha subunits. This Pasteurella multocida (strain Pm70) protein is DNA-directed RNA polymerase subunit omega (rpoZ).